The following is a 1037-amino-acid chain: Caspase recruitment domain-containing protein 6 (1037 aa).

A2 carries the post-translational modification N-acetylalanine. The region spanning 3–94 (TESTPSEIIE…QSAAICGLRH (92 aa)) is the CARD domain. The residue at position 154 (S154) is a Phosphoserine. Disordered regions lie at residues 235-270 (DPEHVGYDGEEDFENSETTEFSGEEPSYEGSETSLS), 669-704 (VSSGENMAGTAEGEGQQRHSQLKSSSKSQALMPIQE), and 887-1037 (RTSH…GGKH). Residues 242-261 (DGEEDFENSETTEFSGEEPS) show a composition bias toward acidic residues. Positions 690 to 699 (LKSSSKSQAL) are enriched in low complexity. Composition is skewed to polar residues over residues 911-928 (ASQQGVQMKTQGGASNPA), 938-954 (KSSQFKSDQSNPSTVKH), and 963-984 (VPSQPKSSQTKSCQSQPSQTKP). Residue S985 is modified to Phosphoserine. Residues 994 to 1012 (PSQPWPPQSKPSQPRPPQP) are compositionally biased toward pro residues. A compositionally biased stretch (basic residues) spans 1023-1037 (KAHHSKAGQKRGGKH).

In terms of biological role, may be involved in apoptosis. This Homo sapiens (Human) protein is Caspase recruitment domain-containing protein 6 (CARD6).